Here is a 358-residue protein sequence, read N- to C-terminus: UPF0283 membrane protein PM0909 (358 aa).

3 helical membrane passes run 62-82 (LALT…QWLV), 90-110 (WIYF…VSSL), and 213-233 (ALEA…MFFL).

The protein belongs to the UPF0283 family.

It is found in the cell inner membrane. In Pasteurella multocida (strain Pm70), this protein is UPF0283 membrane protein PM0909.